The primary structure comprises 529 residues: uncharacterized protein (529 aa).

2 consecutive ABC transporter domains span residues 6 to 257 and 287 to 526; these read LAIE…QKLL and IRKG…RQLL. Residues 42 to 49 and 319 to 326 contribute to the ATP site; these read GESGSGKS.

Belongs to the ABC transporter superfamily.

This is an uncharacterized protein from Escherichia coli (strain K12).